Reading from the N-terminus, the 394-residue chain is Metal tolerance protein 11 (394 aa).

Residues 1–103 are Cytoplasmic-facing; it reads MVEPASPDSD…EQDNLAKSET (103 aa). The chain crosses the membrane as a helical span at residues 104–124; that stretch reads LAIRISNIANMLLFAAKVYAS. Residues 125–130 lie on the Vacuolar side of the membrane; it reads VTSGSL. Residues 131-151 form a helical membrane-spanning segment; it reads AIIASTLDSLLDLLSGFILWF. Topologically, residues 152–172 are cytoplasmic; that stretch reads TAFSMQTPNPYQYPIGKKRMQ. The helical transmembrane segment at 173–193 threads the bilayer; that stretch reads PLGILVFASVMATLGLQIILE. At 194–212 the chain is on the vacuolar side; the sequence is SLRTMLSSHKEFNLTKEQE. Residues 213-233 form a helical membrane-spanning segment; it reads SWVVGIMLSVTLVKLLLVLYC. The Cytoplasmic segment spans residues 234–251; sequence RSFTNEIVKAYAQDHFFD. The chain crosses the membrane as a helical span at residues 252-272; it reads VITNIIGLIAVILANYIDYWI. Residue aspartate 273 is a topological domain, vacuolar. Residues 274 to 294 traverse the membrane as a helical segment; the sequence is PVGAIILALYTIRTWSMTVLE. The Cytoplasmic portion of the chain corresponds to 295–394; that stretch reads NVNSLVGKSA…HKPEHARSHC (100 aa).

The protein belongs to the cation diffusion facilitator (CDF) transporter (TC 2.A.4) family. SLC30A subfamily. In terms of tissue distribution, widely expressed.

Its subcellular location is the prevacuolar compartment membrane. It localises to the golgi apparatus membrane. Cation/proton antiporter involved in endogenous manganese tolerance probably through vesicular trafficking and exocytosis. This Arabidopsis thaliana (Mouse-ear cress) protein is Metal tolerance protein 11 (MTP11).